The chain runs to 276 residues: NAC domain-containing protein 67 (276 aa).

One can recognise an NAC domain in the interval 17–170; that stretch reads LPPGFRFHPT…DWVLCRLYNK (154 aa).

As to expression, expressed in leaf blades.

The protein resides in the nucleus. In terms of biological role, probable transcription factor involved in stress response. This chain is NAC domain-containing protein 67, found in Oryza sativa subsp. japonica (Rice).